We begin with the raw amino-acid sequence, 56 residues long: Ovomucoid (56 aa).

The 51-residue stretch at V6 to C56 folds into the Kazal-like domain. 3 cysteine pairs are disulfide-bonded: C8–C38, C16–C35, and C24–C56. Residue N45 is glycosylated (N-linked (GlcNAc...) asparagine).

The protein localises to the secreted. The sequence is that of Ovomucoid from Colinus virginianus (Northern bobwhite).